The following is a 95-amino-acid chain: Orphan antitoxin ParD2 (95 aa).

Its function is as follows. Antitoxin component of a non-functional type II toxin-antitoxin (TA system). Does not neutralize the effect of any of the RelE or ParE toxins. The sequence is that of Orphan antitoxin ParD2 (parD2) from Caulobacter vibrioides (strain ATCC 19089 / CIP 103742 / CB 15) (Caulobacter crescentus).